The primary structure comprises 253 residues: Chloride intracellular channel protein 4 (253 aa).

Position 2 is an N-acetylalanine (A2). Residues 2-101 (ALSMPLNGLK…EEFLEEVLCP (100 aa)) form a required for insertion into the membrane region. Phosphoserine is present on S4. Residue K24 is modified to N6-acetyllysine. The short motif at 35 to 38 (CPFS) is the G-site element. Residues 37 to 57 (FSQRLFMILWLKGVVFSVTTV) form a helical membrane-spanning segment. In terms of domain architecture, GST C-terminal spans 81–244 (NSEVKTDVNK…PSDKEVEIAY (164 aa)). K130 bears the N6-acetyllysine mark. S132, S167, and S236 each carry phosphoserine. Y244 carries the post-translational modification Phosphotyrosine.

The protein belongs to the chloride channel CLIC family. As to quaternary structure, monomer. Interacts with HRH3. As to expression, detected in brain, in cell bodies and dendrites of Purkinje cells in cerebellar neurons (at protein level). Expressed neonatal and adult cardiomyocytes (at protein level). Marked expression was found in hippocampus and cerebellum, and in many other tissues.

It localises to the cytoplasm. Its subcellular location is the cytoskeleton. It is found in the microtubule organizing center. The protein localises to the centrosome. The protein resides in the cytoplasmic vesicle membrane. It localises to the nucleus. Its subcellular location is the cell membrane. It is found in the mitochondrion. The protein localises to the cell junction. The protein resides in the endoplasmic reticulum membrane. It catalyses the reaction chloride(in) = chloride(out). The catalysed reaction is thiocyanate(in) = thiocyanate(out). It carries out the reaction nitrate(in) = nitrate(out). The enzyme catalyses iodide(out) = iodide(in). It catalyses the reaction bromide(in) = bromide(out). The catalysed reaction is fluoride(in) = fluoride(out). It carries out the reaction choline(out) = choline(in). Its activity is regulated as follows. Channel activity is redox- and pH-regulated. Anion vs cation selectivity is enhanced when fully oxidized. In the soluble state, catalyzes glutaredoxin-like thiol disulfide exchange reactions with reduced glutathione as electron donor. Can insert into membranes and form voltage-dependent multi-ion conductive channels. Membrane insertion seems to be redox-regulated and may occur only under oxidizing conditions. Has alternate cellular functions like a potential role in angiogenesis or in maintaining apical-basolateral membrane polarity during mitosis and cytokinesis. Could also promote endothelial cell proliferation and regulate endothelial morphogenesis (tubulogenesis). Promotes cell-surface expression of HRH3. This is Chloride intracellular channel protein 4 (Clic4) from Rattus norvegicus (Rat).